Reading from the N-terminus, the 136-residue chain is MVTSVLSSVTISRVSSVLNRDVKQFGKQFLFDGREETCWNSDQGSCQWVLMEFPQNVLVSQIHLQFQGGFSCQTCALEGCYKDGELVKIADFYPEDTNTLQKFTFAEQSVSKLRVSFLNSTDFFGRITLYHLDVLG.

It belongs to the NR2C2AP family.

It localises to the nucleus. Functionally, may act as a repressor of nr2c2-mediated transactivation by suppressing the binding between nr2c2 and its response element in target genes. The polypeptide is Nuclear receptor 2C2-associated protein (nr2c2ap) (Xenopus tropicalis (Western clawed frog)).